The sequence spans 637 residues: Chaperone protein HtpG (637 aa).

The interval 1–345 (MSQQETHGFQ…SNDLPLNVSR (345 aa)) is a; substrate-binding. The b stretch occupies residues 346–562 (EILQDNHITK…EGEMSSQMIK (217 aa)). A c region spans residues 563–637 (LMQAAGQPVP…MNQMLLANLK (75 aa)).

This sequence belongs to the heat shock protein 90 family. In terms of assembly, homodimer.

It localises to the cytoplasm. In terms of biological role, molecular chaperone. Has ATPase activity. The sequence is that of Chaperone protein HtpG from Shewanella sp. (strain MR-4).